Here is a 156-residue protein sequence, read N- to C-terminus: Class I hydrophobin B (156 aa).

The first 18 residues, 1–18 (MQFTLSAVVLALAGFSAA), serve as a signal peptide directing secretion. 4 disulfides stabilise this stretch: C52–C130, C60–C124, C61–C101, and C131–C149.

The protein belongs to the fungal hydrophobin family.

The protein resides in the secreted. The protein localises to the cell wall. Aerial growth, conidiation, and dispersal of filamentous fungi in the environment rely upon a capability of their secreting small amphipathic proteins called hydrophobins (HPBs) with low sequence identity. Class I can self-assemble into an outermost layer of rodlet bundles on aerial cell surfaces, conferring cellular hydrophobicity that supports fungal growth, development and dispersal; whereas Class II form highly ordered films at water-air interfaces through intermolecular interactions but contribute nothing to the rodlet structure. In P.expansum, hydrophobins contribute to germination, tolerance to cold stress and mycotoxins patulin and citrinin production. HfbA and HfbB are essential for fungal surface hydrophobicity. The chain is Class I hydrophobin B from Penicillium expansum (Blue mold rot fungus).